Here is a 220-residue protein sequence, read N- to C-terminus: Cytidylate kinase (220 aa).

Position 9 to 17 (9 to 17 (GPAASGKST)) interacts with ATP.

Belongs to the cytidylate kinase family. Type 1 subfamily.

Its subcellular location is the cytoplasm. The catalysed reaction is CMP + ATP = CDP + ADP. The enzyme catalyses dCMP + ATP = dCDP + ADP. The chain is Cytidylate kinase from Thermotoga neapolitana (strain ATCC 49049 / DSM 4359 / NBRC 107923 / NS-E).